The following is a 102-amino-acid chain: Small ribosomal subunit protein uS10 (102 aa).

This sequence belongs to the universal ribosomal protein uS10 family. In terms of assembly, part of the 30S ribosomal subunit.

In terms of biological role, involved in the binding of tRNA to the ribosomes. This chain is Small ribosomal subunit protein uS10, found in Oceanobacillus iheyensis (strain DSM 14371 / CIP 107618 / JCM 11309 / KCTC 3954 / HTE831).